A 440-amino-acid polypeptide reads, in one-letter code: Thymidine phosphorylase (440 aa).

It belongs to the thymidine/pyrimidine-nucleoside phosphorylase family. In terms of assembly, homodimer.

The enzyme catalyses thymidine + phosphate = 2-deoxy-alpha-D-ribose 1-phosphate + thymine. The protein operates within pyrimidine metabolism; dTMP biosynthesis via salvage pathway; dTMP from thymine: step 1/2. The enzymes which catalyze the reversible phosphorolysis of pyrimidine nucleosides are involved in the degradation of these compounds and in their utilization as carbon and energy sources, or in the rescue of pyrimidine bases for nucleotide synthesis. The polypeptide is Thymidine phosphorylase (Yersinia pseudotuberculosis serotype O:1b (strain IP 31758)).